Reading from the N-terminus, the 127-residue chain is Small ribosomal subunit protein uS13 (127 aa).

The segment at 93 to 127 (RRSLPVRGQRTHTNARTRKGPRRGTVAGKKKATKT) is disordered.

The protein belongs to the universal ribosomal protein uS13 family. As to quaternary structure, part of the 30S ribosomal subunit. Forms a loose heterodimer with protein S19. Forms two bridges to the 50S subunit in the 70S ribosome.

Located at the top of the head of the 30S subunit, it contacts several helices of the 16S rRNA. In the 70S ribosome it contacts the 23S rRNA (bridge B1a) and protein L5 of the 50S subunit (bridge B1b), connecting the 2 subunits; these bridges are implicated in subunit movement. Contacts the tRNAs in the A and P-sites. This chain is Small ribosomal subunit protein uS13, found in Acidobacterium capsulatum (strain ATCC 51196 / DSM 11244 / BCRC 80197 / JCM 7670 / NBRC 15755 / NCIMB 13165 / 161).